Reading from the N-terminus, the 199-residue chain is 7-methyl-GTP pyrophosphatase (199 aa).

Asp74 functions as the Proton acceptor in the catalytic mechanism.

This sequence belongs to the Maf family. YceF subfamily. The cofactor is a divalent metal cation.

It localises to the cytoplasm. It carries out the reaction N(7)-methyl-GTP + H2O = N(7)-methyl-GMP + diphosphate + H(+). In terms of biological role, nucleoside triphosphate pyrophosphatase that hydrolyzes 7-methyl-GTP (m(7)GTP). May have a dual role in cell division arrest and in preventing the incorporation of modified nucleotides into cellular nucleic acids. This is 7-methyl-GTP pyrophosphatase from Cupriavidus metallidurans (strain ATCC 43123 / DSM 2839 / NBRC 102507 / CH34) (Ralstonia metallidurans).